A 359-amino-acid polypeptide reads, in one-letter code: MNIKKLVRKDIRELIPYQSARKIGGKGDIWLNANEFPEFNNIKLNNIILNRYPECQPEQLTSCYSSYIGINKSNILITRGIDEAIELLIKTFCNPQNEKIIFCPPTYDMYNISAKIIGIKSYEVPLLNFSWQLDINNIAKYISDAKLIYICNPNNPTGNLINYQDIITLLNITLGKTLVIVDEAYIEFSPIHSLTNLIDTYPNLVILRTLSKAFALAGLRCGFILTNVNIVKFLLKVINPYPIPIPTTSIAVQFLSKNNINEMRNRIFDLTLNRFWLVNKLKSMNNCVEHVFNSFANYILVRFYNSRKVFDILSKKGIIVRDQSNKLHLSRCLRISIGTSKECLEVVRVIQKINSLCVY.

At lysine 212 the chain carries N6-(pyridoxal phosphate)lysine.

The protein belongs to the class-II pyridoxal-phosphate-dependent aminotransferase family. Histidinol-phosphate aminotransferase subfamily. Homodimer. Pyridoxal 5'-phosphate is required as a cofactor.

It catalyses the reaction L-histidinol phosphate + 2-oxoglutarate = 3-(imidazol-4-yl)-2-oxopropyl phosphate + L-glutamate. Its pathway is amino-acid biosynthesis; L-histidine biosynthesis; L-histidine from 5-phospho-alpha-D-ribose 1-diphosphate: step 7/9. This Buchnera aphidicola subsp. Melaphis rhois protein is Histidinol-phosphate aminotransferase.